Reading from the N-terminus, the 398-residue chain is Probable sugar efflux transporter (398 aa).

The next 12 helical transmembrane spans lie at 15–35, 50–70, 81–101, 103–123, 136–156, 169–189, 209–229, 246–266, 275–295, 301–321, 333–353, and 364–384; these read VVTL…PVGL, VGIM…PFML, LIGL…AWNF, VLVI…SITA, AQAL…GLPI, TFFA…KLLP, PALM…YTAY, FATV…VLFG, LLVS…MPAA, LAIL…GMQV, VAMS…ALVG, and AIGY…ILIF.

This sequence belongs to the major facilitator superfamily. SotB (TC 2.A.1.2) family.

The protein localises to the cell inner membrane. Functionally, involved in the efflux of sugars. The physiological role may be the reduction of the intracellular concentration of toxic sugars or sugar metabolites. This Enterobacter sp. (strain 638) protein is Probable sugar efflux transporter.